Reading from the N-terminus, the 95-residue chain is Co-chaperonin GroES (95 aa).

The protein belongs to the GroES chaperonin family. In terms of assembly, heptamer of 7 subunits arranged in a ring. Interacts with the chaperonin GroEL.

The protein resides in the cytoplasm. Together with the chaperonin GroEL, plays an essential role in assisting protein folding. The GroEL-GroES system forms a nano-cage that allows encapsulation of the non-native substrate proteins and provides a physical environment optimized to promote and accelerate protein folding. GroES binds to the apical surface of the GroEL ring, thereby capping the opening of the GroEL channel. This chain is Co-chaperonin GroES, found in Pseudoalteromonas translucida (strain TAC 125).